The following is a 526-amino-acid chain: MHVNTLSVLSLVGLVPLAAARLSGSVGPLTSASAKAATKTCNVLDYGAAADKTTDLGAPLASAFADCKTGGLVYVPPGDYALESWAQLSGGKAWALQIDGTIYRTGTDGGNMIFIEHSSDFELFSSTSSGAMQGLGYEFHKDDNWSGPRLLRLYDVSDFALHDFILVDSPSFHLSLDTCSNGEVYNMAIRGGNHGALDGVDVWSTNIWIHDVEVTNKDECVTVKSPAQNILVENIYCNWSGGCGMGSLGADTNISDITYRNVYTWNSNQMMLIKSNGGSGTVSNVVLENFIGHGNAYSLDIDSAWSSMSTQSGDGVEFSNFTIRNWKGTEANGAERGPVKIICPNGAPCYEMYIEDFAMWTEEGDEQWYTCQSAFGSGFCLQSGSDYSSYEATTSTATSAPSGYSAPTMASDLTRDFGSTVSIPIPTIPTSFYPGATPYSALMGAQSSASANVRAVAFGTSAVVSRAGSSSRPAQTGSFLTKSTTAAAGSIMGPTAAAVQGVCAPPAGQGRGAARYGGHRRHGHRH.

Residues 1 to 20 (MHVNTLSVLSLVGLVPLAAA) form the signal peptide. A disulfide bridge connects residues cysteine 41 and cysteine 67. The N-linked (GlcNAc...) asparagine glycan is linked to asparagine 144. Aspartate 218 functions as the Proton donor in the catalytic mechanism. Cysteine 220 and cysteine 237 form a disulfide bridge. N-linked (GlcNAc...) asparagine glycosylation is found at asparagine 238 and asparagine 253. Histidine 293 is an active-site residue. N-linked (GlcNAc...) asparagine glycosylation is present at asparagine 320. 2 disulfides stabilise this stretch: cysteine 343–cysteine 349 and cysteine 371–cysteine 380.

This sequence belongs to the glycosyl hydrolase 28 family.

It is found in the secreted. The enzyme catalyses Endohydrolysis of alpha-D-GalA-(1-&gt;2)-alpha-L-Rha glycosidic bond in the rhamnogalacturonan I backbone with initial inversion of anomeric configuration releasing oligosaccharides with beta-D-GalA at the reducing end.. Functionally, pectinolytic enzymes consist of four classes of enzymes: pectine lyase, polygalacturonase, pectin methylesterase and rhamnogalacturonase. Hydrolyzes alpha-D-galacturonopyranosyl-(1,2)-alpha-L-rhamnopyranosyl linkages in the backbone of the hairy regions of pectins. The polypeptide is Probable rhamnogalacturonase B (rhgB) (Aspergillus terreus (strain NIH 2624 / FGSC A1156)).